The primary structure comprises 495 residues: MSTRSSFADEEQNKVPRIMTFRPSYEEFQNFSAYIEYIESRGAHLAGLAKIQPPAEWVPRKSGYDIDNINMTIPAPICQVVTGAHGVYQQINIQQRRQMTLRQFMEKANSELHQTPRHFDYDDLERKYWKNITYISPLYAADVKGSLSDEDLDVWNIGRLDTILNLVNTDYNIIIDGVNTAYLYFGMWKSSFAWHTEDMDLYSINYLHFGAPKTWYAIPPAYGRRLEKLANETFSENYQECNAYLRHKMTMISPKVLRQHNIPYNKITQEAGEIMITFPFGYHAGFNHGFNGAESTNFASKRWIEYGKRASICRCRSDMVKISMETFVRRFQPERYDNWLKGQDMGCHPEEPGKICAAAPPTLNEYEKQENLRAAKSEEESPQKRGCSLAGNGCERNAESAEDVDDKASVSSYSSCRQLQPVVKLRKLPTIASVPEPSSAPKRYDFNTEAVVRVKRLWNELPCPDRGANLLTNGVVKNTKRMRFQTKVLTLDDED.

In terms of domain architecture, JmjN spans 18 to 60 (IMTFRPSYEEFQNFSAYIEYIESRGAHLAGLAKIQPPAEWVPR). 2-oxoglutarate is bound at residue Tyr139. Positions 149–315 (DEDLDVWNIG…YGKRASICRC (167 aa)) constitute a JmjC domain. Positions 195 and 197 each coordinate Fe cation. Asn205 and Lys213 together coordinate 2-oxoglutarate. 2 residues coordinate Zn(2+): Cys241 and His247. Lys248 is a binding site for 2-oxoglutarate. His283 serves as a coordination point for Fe cation. Residues Cys313 and Cys315 each contribute to the Zn(2+) site. At Ser409 the chain carries Phosphoserine.

Belongs to the JHDM3 histone demethylase family. It depends on Fe(2+) as a cofactor.

It localises to the nucleus. It catalyses the reaction N(6),N(6),N(6)-trimethyl-L-lysyl(9)-[histone H3] + 2 2-oxoglutarate + 2 O2 = N(6)-methyl-L-lysyl(9)-[histone H3] + 2 formaldehyde + 2 succinate + 2 CO2. The catalysed reaction is N(6),N(6),N(6)-trimethyl-L-lysyl(36)-[histone H3] + 2 2-oxoglutarate + 2 O2 = N(6)-methyl-L-lysyl(36)-[histone H3] + 2 formaldehyde + 2 succinate + 2 CO2. Probable histone demethylase that specifically demethylates 'Lys-9' and 'Lys-36' residues of histone H3, thereby playing a central role in histone code. Demethylation of Lys residue generates formaldehyde and succinate. This chain is Probable lysine-specific demethylase 4A (Kdm4A), found in Drosophila melanogaster (Fruit fly).